Consider the following 629-residue polypeptide: MIHNSSYTEAADIKSLSSFIEESSRVPDYISESNNIGWSSNINNPPLFESSSFDITTQNDNWILTETMQNITTESSSTFSRSVASSVFPSSSQAFVSPPSIIDIPISSIPESSSISISSDVLSSAITVSQTSSSSYSSLISSYSTIQSTSSSSISENEISSSSRISPGLLSSVPSITTSFSSGISSSVSPTSSLQQIAEQSSNSSLAENDLLSSSLTILSSVLSSSVLLHNSGVSSSSFTDNFSSTLTNSSNSLAILSSISESSLINTITDLPSSSVLLSPNNSESSIKVSSASSSSSRRKASTYTTPSRIPFSNSSEWYTPLPTPSISSSTNDTSSLLSELALIGISSSSSSSSSSQFYTSSTSSSSLVSSSENYSSSQPTTIEPITSTISSSYSDLSNDGEILSSTLGKSVYYSYIQTFDITASTTTFETALPIVTAFNLKDSYTFSKPSSIITTDLHFYKDWLSGALDSNEENGNKSKNAGTIAGSVVGSVVGLLVCTLIVWYFYIRKRRRNQKWKSFEVPSRSKDVEYNNNDNPFNNEFDFQHRVPPPLPPQRKNHNSIGVPPSSMGLSNTRSADYHMRFSYISSSTDSSDDYSDSMQSALHIGSDSGRERSNDVPEMGYLREII.

N-linked (GlcNAc...) asparagine glycosylation is found at Asn4, Asn70, Asn203, Asn242, Asn249, Asn282, Asn315, Asn333, Asn375, and Asn478. The disordered stretch occupies residues 365–384; it reads SSSSLVSSSENYSSSQPTTI. Residues 489 to 509 form a helical membrane-spanning segment; it reads SVVGSVVGLLVCTLIVWYFYI. Disordered stretches follow at residues 529 to 572 and 591 to 618; these read DVEY…SMGL and TDSSDDYSDSMQSALHIGSDSGRERSND. A compositionally biased stretch (low complexity) spans 533-543; it reads NNNDNPFNNEF.

Belongs to the TDA7 family.

It localises to the vacuole membrane. The polypeptide is Topoisomerase I damage affected protein 7 (TDA7) (Candida glabrata (strain ATCC 2001 / BCRC 20586 / JCM 3761 / NBRC 0622 / NRRL Y-65 / CBS 138) (Yeast)).